A 193-amino-acid chain; its full sequence is Acyl carrier protein phosphodiesterase (193 aa).

The protein belongs to the AcpH family.

It carries out the reaction holo-[ACP] + H2O = apo-[ACP] + (R)-4'-phosphopantetheine + H(+). Converts holo-ACP to apo-ACP by hydrolytic cleavage of the phosphopantetheine prosthetic group from ACP. This is Acyl carrier protein phosphodiesterase from Salmonella newport (strain SL254).